We begin with the raw amino-acid sequence, 192 residues long: Pyridoxal 5'-phosphate synthase subunit PdxT (192 aa).

46 to 48 (GES) contributes to the L-glutamine binding site. The Nucleophile role is filled by Cys-75. Residues Arg-101 and 129 to 130 (IR) each bind L-glutamine. Active-site charge relay system residues include His-166 and Glu-168.

Belongs to the glutaminase PdxT/SNO family. In terms of assembly, in the presence of PdxS, forms a dodecamer of heterodimers. Only shows activity in the heterodimer.

It catalyses the reaction aldehydo-D-ribose 5-phosphate + D-glyceraldehyde 3-phosphate + L-glutamine = pyridoxal 5'-phosphate + L-glutamate + phosphate + 3 H2O + H(+). The enzyme catalyses L-glutamine + H2O = L-glutamate + NH4(+). It participates in cofactor biosynthesis; pyridoxal 5'-phosphate biosynthesis. Its function is as follows. Catalyzes the hydrolysis of glutamine to glutamate and ammonia as part of the biosynthesis of pyridoxal 5'-phosphate. The resulting ammonia molecule is channeled to the active site of PdxS. The chain is Pyridoxal 5'-phosphate synthase subunit PdxT from Staphylococcus carnosus (strain TM300).